The following is an 82-amino-acid chain: Omega-ctenitoxin-Pn1a (82 aa).

An N-terminal signal peptide occupies residues 1-21 (MWLKIQVFLLAITLITLGIQA). A propeptide spanning residues 22 to 37 (EPNSSPNNPLIEEEAR) is cleaved from the precursor. Cystine bridges form between C39–C54, C46–C59, C53–C70, and C61–C68. Positions 72 to 82 (KKFIEFFGGGK) are excised as a propeptide.

It belongs to the neurotoxin 02 (plectoxin) family. In terms of tissue distribution, expressed by the venom gland.

Its subcellular location is the secreted. Functionally, antagonist of L-type calcium channels (Cav1/CACNA1). Induces immediate clockwise gyration and flaccid paralysis after 6 hours at dose levels of 5 ug per mouse. The protein is Omega-ctenitoxin-Pn1a of Phoneutria nigriventer (Brazilian armed spider).